Reading from the N-terminus, the 67-residue chain is Large ribosomal subunit protein uL29 (67 aa).

The protein belongs to the universal ribosomal protein uL29 family.

The polypeptide is Large ribosomal subunit protein uL29 (Cereibacter sphaeroides (strain ATCC 17025 / ATH 2.4.3) (Rhodobacter sphaeroides)).